Reading from the N-terminus, the 131-residue chain is Bacteriohemerythrin (131 aa).

H20, E23, H56, E60, H75, H79, H117, and D122 together coordinate Fe cation.

The protein belongs to the hemerythrin family. In terms of assembly, monomer.

Functionally, oxygen-binding protein. May be involved in a storage mechanism or for delivery to oxygen-requiring enzymes. The oxygen-binding site contains two iron atoms. This Aquifex aeolicus (strain VF5) protein is Bacteriohemerythrin.